The sequence spans 286 residues: Elongation factor Ts (286 aa).

The tract at residues 82–85 (TDFV) is involved in Mg(2+) ion dislocation from EF-Tu. The tract at residues 212-286 (VAAQTGQKVE…SPSKKGKKKK (75 aa)) is disordered. Over residues 215-227 (QTGQKVEQPQAAQ) the composition is skewed to polar residues. Residues 253 to 269 (ETDSPAAETTTEPPKTT) are compositionally biased toward low complexity.

This sequence belongs to the EF-Ts family.

The protein resides in the cytoplasm. Functionally, associates with the EF-Tu.GDP complex and induces the exchange of GDP to GTP. It remains bound to the aminoacyl-tRNA.EF-Tu.GTP complex up to the GTP hydrolysis stage on the ribosome. This chain is Elongation factor Ts, found in Gloeothece citriformis (strain PCC 7424) (Cyanothece sp. (strain PCC 7424)).